Here is a 445-residue protein sequence, read N- to C-terminus: Phosphoglucosamine mutase (445 aa).

Ser102 (phosphoserine intermediate) is an active-site residue. Mg(2+) is bound by residues Ser102, Asp241, Asp243, and Asp245. Ser102 carries the phosphoserine modification.

It belongs to the phosphohexose mutase family. Requires Mg(2+) as cofactor. Post-translationally, activated by phosphorylation.

It catalyses the reaction alpha-D-glucosamine 1-phosphate = D-glucosamine 6-phosphate. Catalyzes the conversion of glucosamine-6-phosphate to glucosamine-1-phosphate. The chain is Phosphoglucosamine mutase from Shewanella halifaxensis (strain HAW-EB4).